A 356-amino-acid polypeptide reads, in one-letter code: Proline-rich protein 19 (356 aa).

Polar residues predominate over residues Met1–Gln12. 4 disordered regions span residues Met1–Pro53, Leu95–Gly143, Ile216–Leu255, and Pro312–Ser331. A compositionally biased stretch (basic residues) spans Arg19–Arg29.

In terms of assembly, interacts with CNTD1.

The protein localises to the nucleus. The protein resides in the chromosome. Its function is as follows. Promotes meiotic crossing over formation through its interaction with CNTD1 by participating in the crossover differentiation step of crossover-specific recombination intermediates. This is Proline-rich protein 19 from Homo sapiens (Human).